Reading from the N-terminus, the 37-residue chain is Large ribosomal subunit protein bL36 (37 aa).

This sequence belongs to the bacterial ribosomal protein bL36 family.

This chain is Large ribosomal subunit protein bL36, found in Nostoc punctiforme (strain ATCC 29133 / PCC 73102).